Consider the following 711-residue polypeptide: Nucleolin (711 aa).

The tract at residues 1–304 is disordered; that stretch reads MVKLAKAGKN…KKQKVEGTEP (304 aa). An N6-acetyllysine mark is found at K9, K15, and K16. Residues 24 to 43 show a composition bias toward acidic residues; that stretch reads VEEDSEDEEMSEDEEDDSSG. Residues S28, S34, S41, and S42 each carry the phosphoserine modification. Over residues 56 to 107 the composition is skewed to low complexity; sequence AAATSAKKVVVSPTKKVAVATPAKKAAVTPGKKAAATPAKKTVTPAKAVATP. Repeat unit 1 spans residues 58 to 65; it reads ATSAKKVV. An 8 X 8 AA tandem repeats of X-T-P-X-K-K-X-X region spans residues 58–135; it reads ATSAKKVVVS…GAAIPAKGAK (78 aa). Position 67 is a phosphoserine (S67). Phosphothreonine is present on residues T69, T76, T84, and T92. Tandem repeats lie at residues 75 to 82, 83 to 90, and 91 to 98. K96 carries the N6-acetyllysine modification. Residue T99 is modified to Phosphothreonine. The 5; truncated repeat unit spans residues 99–104; it reads TPAKAV. K102 carries the post-translational modification N6-acetyllysine. Repeat unit 6 spans residues 105–112; it reads ATPGKKGA. T106 is modified (phosphothreonine). An N6-acetyllysine modification is found at K109. T113 carries the post-translational modification Phosphothreonine. K116 carries the post-translational modification N6-acetyllysine. A run of 2 repeats spans residues 120–127 and 128–135. The residue at position 121 (T121) is a Phosphothreonine. Over residues 122–137 the composition is skewed to low complexity; that stretch reads PGKKGAAIPAKGAKNG. K124 carries the N6-acetyllysine modification. 4 positions are modified to phosphoserine: S145, S153, S184, and S207. Composition is skewed to acidic residues over residues 145-171 and 184-212; these read SDEE…DEIE and SEDE…EEAM. At T215 the chain carries Phosphothreonine. Acidic residues predominate over residues 235 to 273; the sequence is EDEDEEEDDEDEDDDDDEDDEDEDDDDEDEEEEEEEEEP. Basic and acidic residues predominate over residues 274 to 301; that stretch reads VKEAPGKRKKEMAKQKAAPEAKKQKVEG. K298 is covalently cross-linked (Glycyl lysine isopeptide (Lys-Gly) (interchain with G-Cter in SUMO1); alternate). Residue K298 forms a Glycyl lysine isopeptide (Lys-Gly) (interchain with G-Cter in SUMO2); alternate linkage. The residue at position 302 (T302) is a Phosphothreonine. 2 RRM domains span residues 308-384 and 394-467; these read FNLF…KPKG and RTLL…YTGE. Position 319 is an N6-acetyllysine (K319). K325 is covalently cross-linked (Glycyl lysine isopeptide (Lys-Gly) (interchain with G-Cter in SUMO1); alternate). Residue K325 forms a Glycyl lysine isopeptide (Lys-Gly) (interchain with G-Cter in SUMO2); alternate linkage. K349 carries the N6-acetyllysine modification. S357 carries the post-translational modification Phosphoserine. Phosphothreonine is present on T368. Residue K371 forms a Glycyl lysine isopeptide (Lys-Gly) (interchain with G-Cter in SUMO2) linkage. Residue K378 forms a Glycyl lysine isopeptide (Lys-Gly) (interchain with G-Cter in SUMO2); alternate linkage. K378 is modified (N6-acetyllysine; alternate). N6-acetyllysine occurs at positions 399 and 404. T406 bears the Phosphothreonine mark. K428 and K445 each carry N6-acetyllysine. Residues S459 and S461 each carry the phosphoserine modification. N6-acetyllysine occurs at positions 468 and 478. One can recognise an RRM 3 domain in the interval 487-561; that stretch reads KTLVLSNLSY…RAIRLELQGP (75 aa). Residue K514 forms a Glycyl lysine isopeptide (Lys-Gly) (interchain with G-Cter in SUMO2); alternate linkage. K514 carries the N6-acetyllysine; alternate modification. N6-acetyllysine is present on K522. Residue S564 is modified to Phosphoserine. K573 bears the N6-acetyllysine mark. Positions 573–648 constitute an RRM 4 domain; the sequence is KTLFVKGLSE…NKVTLDWAKP (76 aa). K578 participates in a covalent cross-link: Glycyl lysine isopeptide (Lys-Gly) (interchain with G-Cter in SUMO2); alternate. At K578 the chain carries N6-acetyllysine; alternate. Phosphoserine is present on S581. Residue K590 forms a Glycyl lysine isopeptide (Lys-Gly) (interchain with G-Cter in SUMO1); alternate linkage. Residue K590 forms a Glycyl lysine isopeptide (Lys-Gly) (interchain with G-Cter in SUMO2); alternate linkage. Phosphoserine is present on residues S592 and S620. K625 is covalently cross-linked (Glycyl lysine isopeptide (Lys-Gly) (interchain with G-Cter in SUMO2)). Residues 641–711 form a disordered region; the sequence is VTLDWAKPKG…KPQGKKTKFE (71 aa). K647 carries the N6-acetyllysine modification. The segment covering 651-697 has biased composition (gly residues); the sequence is EGGFGGRGGGRGGFGGRGGGRGGRGGFGGRGRGGFGGRGGFRGGRGG. R657, R661, R667, R671, R674, R680, R682, R688, and R692 each carry asymmetric dimethylarginine. R695 bears the Asymmetric dimethylarginine; alternate mark. R695 is modified (omega-N-methylarginine; alternate). Over residues 698–711 the composition is skewed to basic and acidic residues; it reads GGDHKPQGKKTKFE.

As to quaternary structure, identified in a IGF2BP1-dependent mRNP granule complex containing untranslated mRNAs. Component of the SWAP complex that consists of NPM1, NCL/nucleolin, PARP1 and SWAP70. Component of a complex which is at least composed of HTATSF1/Tat-SF1, the P-TEFb complex components CDK9 and CCNT1, RNA polymerase II, SUPT5H, and NCL/nucleolin. Interacts with AICDA. Interacts with APTX. Interacts with C1QBP. Interacts with ERBB4. Interacts (via C-terminus) with FMR1 isoform 6 (via N-terminus). Interacts with GZF1; this interaction is important for nucleolar localization of GZF1. Interacts with NSUN2. Interacts with NVL. Interacts (via N-terminus domain) with SETX. Interacts (via RRM1 and C-terminal RRM4/Arg/Gly-rich domains) with TERT; the interaction is important for nucleolar localization of TERT. Interacts with WDR46. Interacts with ZFP36. Interacts with LRRC34. Interacts with RRP1B. Interacts with HNRNPU; this interaction occurs during mitosis. Interacts with RIOK1; RIOK1 recruits NCL to PRMT5 for symmetrically methylation. Interacts with ZBTB7B. Interacts with MDK; this interaction promotes NCL clustering and lateral movements of this complex into lipid rafts leading to MDK internalization. Interacts with HDGF. Interacts with ALKBH2. Interacts with IGFBP5; this interaction is necessary for IGFBP5 localization to the nucleus. In terms of processing, some glutamate residues are glycylated by TTLL8. This modification occurs exclusively on glutamate residues and results in a glycine chain on the gamma-carboxyl group. Post-translationally, symmetrically methylated by PRMT5.

It localises to the nucleus. The protein resides in the nucleolus. Its subcellular location is the cytoplasm. Nucleolin is the major nucleolar protein of growing eukaryotic cells. It is found associated with intranucleolar chromatin and pre-ribosomal particles. It induces chromatin decondensation by binding to histone H1. It is thought to play a role in pre-rRNA transcription and ribosome assembly. May play a role in the process of transcriptional elongation. Binds RNA oligonucleotides with 5'-UUAGGG-3' repeats more tightly than the telomeric single-stranded DNA 5'-TTAGGG-3' repeats. The sequence is that of Nucleolin (NCL) from Macaca fascicularis (Crab-eating macaque).